The primary structure comprises 27 residues: GCIATGSFCTLSKGCCTKNCGWNFACN.

3 disulfides stabilise this stretch: Cys-2-Cys-16, Cys-9-Cys-20, and Cys-15-Cys-26.

The protein belongs to the nemertide family. As to expression, confined to the epidermis and to the mucus layer.

It is found in the secreted. Its function is as follows. Highly potent toxin against both insect and some mammalian sodium channels (Nav). It potently inhibits inactivation of insect sodium channels of B.germanica (BgNav1) and also delays the inactivation of mammalian Nav with potent activity on Nav1.3/SCN3A and Nav1.4/SCN4A. 1 uM is enough to completely inhibits the inactivation, resulting in sustained non-inactivating currents. In addition, the toxin significantly enhances the recovery from inactivation, and the open state is not required for the toxin to interact with the channel. In vivo, injection into brine shrimp (Artemia salina) stops movement or causes death after 24 hours (EC(50)=0.4 uM). The chain is Nemertide alpha-8 from Riseriellus occultus (Ribbon worm).